The chain runs to 480 residues: Endothelial transcription factor GATA-2 (480 aa).

The residue at position 73 (Ser73) is a Phosphoserine. At Arg86 the chain carries Asymmetric dimethylarginine. A disordered region spans residues 119-209 (SPFSKTPLHP…GSAARGEDKD (91 aa)). Residues 143-153 (GAGGGSGGGSG) show a composition bias toward gly residues. Residues 185 to 203 (PSTTGAASPASSSAGGSAA) show a composition bias toward low complexity. Residue Ser192 is modified to Phosphoserine. 2 GATA-type zinc fingers span residues 295 to 319 (CVNC…CNAC) and 349 to 373 (CANC…CNAC). Lys389 is covalently cross-linked (Glycyl lysine isopeptide (Lys-Gly) (interchain with G-Cter in SUMO2)). A disordered region spans residues 448 to 480 (HSGHILPTPTPIHPSSSLSFGHPHPSSMVTAMG).

In terms of assembly, interacts with BRD3. Interacts with AR and CCAR1. Interacts with MDFIC. Endothelial cells.

Its subcellular location is the nucleus. In terms of biological role, transcriptional activator which regulates endothelin-1 gene expression in endothelial cells. Binds to the consensus sequence 5'-AGATAG-3'. The protein is Endothelial transcription factor GATA-2 (GATA2) of Homo sapiens (Human).